Consider the following 384-residue polypeptide: S-adenosylmethionine synthase (384 aa).

ATP is bound at residue histidine 15. Residue aspartate 17 coordinates Mg(2+). Glutamate 43 serves as a coordination point for K(+). L-methionine contacts are provided by glutamate 56 and glutamine 99. The interval 99-109 (QSSDINQGVDR) is flexible loop. ATP-binding positions include 164 to 166 (DAK), 230 to 231 (RF), aspartate 239, 245 to 246 (RK), alanine 262, and lysine 266. Aspartate 239 contacts L-methionine. Residue lysine 270 coordinates L-methionine.

It belongs to the AdoMet synthase family. As to quaternary structure, homotetramer; dimer of dimers. Mg(2+) is required as a cofactor. Requires K(+) as cofactor.

Its subcellular location is the cytoplasm. The catalysed reaction is L-methionine + ATP + H2O = S-adenosyl-L-methionine + phosphate + diphosphate. It functions in the pathway amino-acid biosynthesis; S-adenosyl-L-methionine biosynthesis; S-adenosyl-L-methionine from L-methionine: step 1/1. Its function is as follows. Catalyzes the formation of S-adenosylmethionine (AdoMet) from methionine and ATP. The overall synthetic reaction is composed of two sequential steps, AdoMet formation and the subsequent tripolyphosphate hydrolysis which occurs prior to release of AdoMet from the enzyme. The protein is S-adenosylmethionine synthase of Pasteurella multocida (strain Pm70).